The chain runs to 526 residues: Acid-sensing ion channel 1 (526 aa).

Over 1–49 the chain is Cytoplasmic; sequence MELKTEEEEVGGVQPVSIQAFASSSTLHGLAHIFSYERLSLKRALWALC. The helical transmembrane segment at 50–66 threads the bilayer; it reads FLGSLAVLLCVCTERVQ. Over 67–425 the chain is Extracellular; the sequence is YYFCYHHVTK…ETIEQKKAYE (359 aa). 7 cysteine pairs are disulfide-bonded: C93-C194, C172-C179, C290-C365, C308-C361, C312-C359, C321-C343, and C323-C335. N-linked (GlcNAc...) asparagine glycans are attached at residues N366 and N393. Residues 426–456 traverse the membrane as a discontinuously helical segment; that stretch reads IAGLLGDIGGQMGLFIGASILTVLELFDYAY. Residues 442–444 carry the GAS motif; ion selectivity filter motif; sequence GAS. The Cytoplasmic segment spans residues 457–526; sequence EVIKHRLCRR…ARGTFEDFTC (70 aa). 2 positions are modified to phosphoserine: S477 and S497.

Belongs to the amiloride-sensitive sodium channel (TC 1.A.6) family. ASIC1 subfamily. As to quaternary structure, homotrimer. Heterotrimer; with other ASIC proteins producing channel with different properties. Interacts with PICK1; regulates ASIC1 clustering in membranes. Interacts with STOM; alters heterotrimeric ASIC channels activity. In terms of processing, pH-gating could be regulated by serine proteases. Phosphorylation by PKA regulates interaction with PICK1 and subcellular localization. Phosphorylation by PKC may regulate the channel. Expressed in dorsal root ganglia and sciatic nerve (at protein level). Widely distributed throughout the brain. Expressed in olfactory bulb, neo and allocortical regions, dentate granule cells, pyramidal cells of CA1-CA3 subfields of the hippocampal formation, habenula, basolateral amygdaloid nuclei, and in the Purkinje and granule cells of the cerebellum. Diffusely detected over most other regions of the basal ganglia, including thalamic nuclei, substantia nigra, striatum and globus pallidus, hypothalamus, midbrain, pons, medulla and choroid plexus. As to expression, expressed only in dorsal root ganglion (DRG). In terms of tissue distribution, expressed exclusively in trigeminal ganglion and dorsal root ganglion.

The protein resides in the cell membrane. It is found in the postsynaptic cell membrane. The protein localises to the cell projection. It localises to the dendrite. It carries out the reaction Na(+)(in) = Na(+)(out). It catalyses the reaction Li(+)(in) = Li(+)(out). The catalysed reaction is K(+)(in) = K(+)(out). The enzyme catalyses Ca(2+)(in) = Ca(2+)(out). It carries out the reaction H(+)(in) = H(+)(out). With respect to regulation, inhibited by the diuretic drug amiloride. External calcium is required to potentiate proton activation of ASIC1 at physiological concentrations, but at higher, non-physiological concentrations, it inhibits activation. Also potentiated by other multivalent cations like Mg(2+), Ba(2+). Activated by FMRFamide-related neuropeptides. Inhibited by anti-inflammatory drugs like salicylic acid. The spider venom psalmotoxin-1 specifically inhibits the ASIC1 homotrimer. The snake venom mambalgin-1, mambalgin-2 and mambalgin-3 inhibit the homotrimer of Asic1a (ASIC1 isoform 1). The snake venom mambalgin-1 and mambalgin-2 inhibit heterotrimers of Asic1a-Asic1b (ASIC1 isoform 1-ASIC1 isoform 3). Heterotrimer of Asic1a-Asic2a is inhibited by the snake venom mambalgin-1, mambalgin-2 and mambalgin-3. Heterotrimer of Asic1a-Asic2b is inhibited by the snake venom mambalgin-1 and mambalgin-2. The spider venom Pi-theraphotoxin-Hm3a inhibits the homotrimer of Asic1a (ASIC1 isoform 1). The spider venom Pi-theraphotoxin-Hm3a inhibits heterotrimers of Asic1a-Asic1b (ASIC1 isoform 1-ASIC1 isoform 3). The spider venom Pi-hexatoxin-Hi1a inhibits the ASIC1 homotrimer. Not inhibited by extracellular calcium. Functionally, forms voltage-independent, pH-gated trimeric sodium channels that act as postsynaptic excitatory receptors in the nervous system, playing a crucial role in regulating synaptic plasticity, learning, and memory. Upon extracellular pH drop this channel elicits transient, fast activating, and completely desensitizing inward currents. Displays high selectivity for sodium ions but can also permit the permeation of other cations. Regulates more or less directly intracellular calcium concentration and CaMKII phosphorylation, and thereby the density of dendritic spines. Modulates neuronal activity in the circuits underlying innate fear. In terms of biological role, permeable to other cations including calcium, lithium and potassium. Its function is as follows. pH activation and steady-state inactivation are shifted to more acidic values. Forms channels that are not permeable to calcium as it discrimates stronger between monovalent cations. Has no pH-gated sodium channel activity per se but can associate with other ASICs and regulate their pH-sensitivity. In Rattus norvegicus (Rat), this protein is Acid-sensing ion channel 1.